Here is a 383-residue protein sequence, read N- to C-terminus: Acetylornithine deacetylase (383 aa).

Residue histidine 80 coordinates Zn(2+). Aspartate 82 is an active-site residue. A Zn(2+)-binding site is contributed by aspartate 112. Residue glutamate 144 is part of the active site. Glutamate 145, glutamate 169, and histidine 355 together coordinate Zn(2+).

The protein belongs to the peptidase M20A family. ArgE subfamily. In terms of assembly, homodimer. Requires Zn(2+) as cofactor. Co(2+) is required as a cofactor. It depends on glutathione as a cofactor.

It is found in the cytoplasm. The enzyme catalyses N(2)-acetyl-L-ornithine + H2O = L-ornithine + acetate. It functions in the pathway amino-acid biosynthesis; L-arginine biosynthesis; L-ornithine from N(2)-acetyl-L-ornithine (linear): step 1/1. In terms of biological role, catalyzes the hydrolysis of the amide bond of N(2)-acetylated L-amino acids. Cleaves the acetyl group from N-acetyl-L-ornithine to form L-ornithine, an intermediate in L-arginine biosynthesis pathway, and a branchpoint in the synthesis of polyamines. The protein is Acetylornithine deacetylase of Escherichia coli O9:H4 (strain HS).